Reading from the N-terminus, the 280-residue chain is RNA polymerase II holoenzyme cyclin-like subunit (280 aa).

One can recognise a Cyclin N-terminal domain in the interval 23 to 150; that stretch reads ERRKGLEDIF…LIEELGTYLV (128 aa).

This sequence belongs to the cyclin family. Cyclin C subfamily. As to quaternary structure, component of the SRB8-11 complex, a regulatory module of the Mediator complex.

It is found in the nucleus. Component of the SRB8-11 complex. The SRB8-11 complex is a regulatory module of the Mediator complex which is itself involved in regulation of basal and activated RNA polymerase II-dependent transcription. The SRB8-11 complex may be involved in the transcriptional repression of a subset of genes regulated by Mediator. It may inhibit the association of the Mediator complex with RNA polymerase II to form the holoenzyme complex. The SRB8-11 complex phosphorylates the C-terminal domain (CTD) of the largest subunit of RNA polymerase II. This chain is RNA polymerase II holoenzyme cyclin-like subunit (SSN8), found in Yarrowia lipolytica (strain CLIB 122 / E 150) (Yeast).